The chain runs to 205 residues: Potassium-transporting ATPase KdpC subunit (205 aa).

Residues 7 to 27 traverse the membrane as a helical segment; sequence PAIVILVALTIITGLIYPLAM.

The protein belongs to the KdpC family. As to quaternary structure, the system is composed of three essential subunits: KdpA, KdpB and KdpC.

The protein localises to the cell inner membrane. Part of the high-affinity ATP-driven potassium transport (or Kdp) system, which catalyzes the hydrolysis of ATP coupled with the electrogenic transport of potassium into the cytoplasm. This subunit acts as a catalytic chaperone that increases the ATP-binding affinity of the ATP-hydrolyzing subunit KdpB by the formation of a transient KdpB/KdpC/ATP ternary complex. The protein is Potassium-transporting ATPase KdpC subunit of Nitrobacter hamburgensis (strain DSM 10229 / NCIMB 13809 / X14).